A 455-amino-acid chain; its full sequence is Protein chibby homolog 2 (455 aa).

Phosphoserine is present on residues Ser41, Ser86, Ser89, Ser97, Ser124, Ser144, Ser148, and Ser150. The stretch at 160 to 197 (KRLAKECLLQENKTLREENRALREENRMLRKENKILQV) forms a coiled coil. Phosphoserine is present on residues Ser211 and Ser225. Residues 240–266 (GRENSTLQLLREENRALQQLLEQRKAY) adopt a coiled-coil conformation. Residues 267–318 (WAQPDEKAASTEEIKPISSPHEEPHGLLPDPGPGLPSPFEEPKGLPAPPDDS) form a disordered region. Residues 270–291 (PDEKAASTEEIKPISSPHEEPH) show a composition bias toward basic and acidic residues. 2 positions are modified to phosphoserine: Ser276 and Ser332. Residues 350–421 (SQSLELLREM…KLKLQQKLVI (72 aa)) are a coiled coil.

It belongs to the chibby family. SPERT subfamily. As to quaternary structure, homodimer. Binds to NEK1.

In Bos taurus (Bovine), this protein is Protein chibby homolog 2 (CBY2).